Reading from the N-terminus, the 250-residue chain is Type III pantothenate kinase (250 aa).

Asp13–Lys20 is a binding site for ATP. Gly110–Leu113 provides a ligand contact to substrate. Asp112 functions as the Proton acceptor in the catalytic mechanism. Thr134 serves as a coordination point for ATP. Thr186 lines the substrate pocket.

Belongs to the type III pantothenate kinase family. As to quaternary structure, homodimer. It depends on NH4(+) as a cofactor. Requires K(+) as cofactor.

Its subcellular location is the cytoplasm. It catalyses the reaction (R)-pantothenate + ATP = (R)-4'-phosphopantothenate + ADP + H(+). It participates in cofactor biosynthesis; coenzyme A biosynthesis; CoA from (R)-pantothenate: step 1/5. Its function is as follows. Catalyzes the phosphorylation of pantothenate (Pan), the first step in CoA biosynthesis. The polypeptide is Type III pantothenate kinase (Mycoplasmopsis synoviae (strain 53) (Mycoplasma synoviae)).